A 326-amino-acid polypeptide reads, in one-letter code: DNA-directed RNA polymerase subunit alpha (326 aa).

Residues 1-230 form an alpha N-terminal domain (alpha-NTD) region; the sequence is MLKIEKQAKA…LHLDPFLEIG (230 aa). The alpha C-terminal domain (alpha-CTD) stretch occupies residues 249 to 326; that stretch reads DIQVIDDKSH…YDLEKNGSPE (78 aa).

This sequence belongs to the RNA polymerase alpha chain family. In terms of assembly, homodimer. The RNAP catalytic core consists of 2 alpha, 1 beta, 1 beta' and 1 omega subunit. When a sigma factor is associated with the core the holoenzyme is formed, which can initiate transcription.

The catalysed reaction is RNA(n) + a ribonucleoside 5'-triphosphate = RNA(n+1) + diphosphate. Functionally, DNA-dependent RNA polymerase catalyzes the transcription of DNA into RNA using the four ribonucleoside triphosphates as substrates. The sequence is that of DNA-directed RNA polymerase subunit alpha from Fusobacterium nucleatum subsp. nucleatum (strain ATCC 25586 / DSM 15643 / BCRC 10681 / CIP 101130 / JCM 8532 / KCTC 2640 / LMG 13131 / VPI 4355).